Reading from the N-terminus, the 516-residue chain is DNA topoisomerase large subunit (516 aa).

128–136 (VTGGMNGVG) is an ATP binding site. Residues 369-400 (AALARKLAAEKAAETKAAKKASKAKVHKHIKA) mediate DNA binding.

The protein belongs to the type II topoisomerase family. In terms of assembly, part of the DNA topoisomerase complex made of gp39, gp52 and gp60. Mg(2+) is required as a cofactor.

The catalysed reaction is ATP-dependent breakage, passage and rejoining of double-stranded DNA.. Its function is as follows. Large subunit of the DNA topoisomerase that untwists superhelical DNA. Controls of topological states of double-stranded DNA by transient breakage and subsequent rejoining of DNA strands. The sequence is that of DNA topoisomerase large subunit (39) from Escherichia coli (Bacteriophage T4).